A 339-amino-acid chain; its full sequence is Holliday junction branch migration complex subunit RuvB (339 aa).

Positions 2 to 187 (KDVNDEERII…FGIIEHMQYY (186 aa)) are large ATPase domain (RuvB-L). Residues Leu26, Arg27, Gly68, Lys71, Thr72, Thr73, 134-136 (EDF), Arg177, Tyr187, and Arg224 each bind ATP. Thr72 lines the Mg(2+) pocket. Positions 188-258 (SIDDLEKIIQ…TTKHSLHLLE (71 aa)) are small ATPAse domain (RuvB-S). Residues 261 to 339 (DEGLDQTDRK…QLGYPPKKAE (79 aa)) are head domain (RuvB-H). DNA-binding residues include Arg316 and Arg321.

Belongs to the RuvB family. Homohexamer. Forms an RuvA(8)-RuvB(12)-Holliday junction (HJ) complex. HJ DNA is sandwiched between 2 RuvA tetramers; dsDNA enters through RuvA and exits via RuvB. An RuvB hexamer assembles on each DNA strand where it exits the tetramer. Each RuvB hexamer is contacted by two RuvA subunits (via domain III) on 2 adjacent RuvB subunits; this complex drives branch migration. In the full resolvosome a probable DNA-RuvA(4)-RuvB(12)-RuvC(2) complex forms which resolves the HJ.

It is found in the cytoplasm. It carries out the reaction ATP + H2O = ADP + phosphate + H(+). Functionally, the RuvA-RuvB-RuvC complex processes Holliday junction (HJ) DNA during genetic recombination and DNA repair, while the RuvA-RuvB complex plays an important role in the rescue of blocked DNA replication forks via replication fork reversal (RFR). RuvA specifically binds to HJ cruciform DNA, conferring on it an open structure. The RuvB hexamer acts as an ATP-dependent pump, pulling dsDNA into and through the RuvAB complex. RuvB forms 2 homohexamers on either side of HJ DNA bound by 1 or 2 RuvA tetramers; 4 subunits per hexamer contact DNA at a time. Coordinated motions by a converter formed by DNA-disengaged RuvB subunits stimulates ATP hydrolysis and nucleotide exchange. Immobilization of the converter enables RuvB to convert the ATP-contained energy into a lever motion, pulling 2 nucleotides of DNA out of the RuvA tetramer per ATP hydrolyzed, thus driving DNA branch migration. The RuvB motors rotate together with the DNA substrate, which together with the progressing nucleotide cycle form the mechanistic basis for DNA recombination by continuous HJ branch migration. Branch migration allows RuvC to scan DNA until it finds its consensus sequence, where it cleaves and resolves cruciform DNA. In Lactobacillus gasseri (strain ATCC 33323 / DSM 20243 / BCRC 14619 / CIP 102991 / JCM 1131 / KCTC 3163 / NCIMB 11718 / NCTC 13722 / AM63), this protein is Holliday junction branch migration complex subunit RuvB.